A 108-amino-acid polypeptide reads, in one-letter code: MSNQQKQLQLPSASIKKPKEKQKSQIVRIIQSKFKDYQYMFLLIKLSTYSKFDQDDDFNTFLSFLESEYKFSKQLSSKEIVLSLRYTKNTKITPYINHSKFETEKKIS.

Over residues 1–12 (MSNQQKQLQLPS) the composition is skewed to polar residues. Positions 1 to 22 (MSNQQKQLQLPSASIKKPKEKQ) are disordered.

This is an uncharacterized protein from Dictyostelium discoideum (Social amoeba).